We begin with the raw amino-acid sequence, 141 residues long: Transcription antitermination protein NusB (141 aa).

The protein belongs to the NusB family.

Its function is as follows. Involved in transcription antitermination. Required for transcription of ribosomal RNA (rRNA) genes. Binds specifically to the boxA antiterminator sequence of the ribosomal RNA (rrn) operons. The chain is Transcription antitermination protein NusB from Neisseria meningitidis serogroup A / serotype 4A (strain DSM 15465 / Z2491).